Here is a 150-residue protein sequence, read N- to C-terminus: Large ribosomal subunit protein bL9 (150 aa).

Belongs to the bacterial ribosomal protein bL9 family.

Its function is as follows. Binds to the 23S rRNA. This Variovorax paradoxus (strain S110) protein is Large ribosomal subunit protein bL9.